A 295-amino-acid polypeptide reads, in one-letter code: Small ribosomal subunit protein bS1 (295 aa).

3 S1 motif domains span residues 28 to 97 (GQLV…VSLR), 115 to 179 (GQTV…LSER), and 193 to 261 (GQLI…LSTK).

It belongs to the bacterial ribosomal protein bS1 family.

Its function is as follows. Binds mRNA. The sequence is that of Small ribosomal subunit protein bS1 (rpsA) from Synechococcus elongatus (strain ATCC 33912 / PCC 7942 / FACHB-805) (Anacystis nidulans R2).